The chain runs to 259 residues: MGTASRAGIASARRIVVKVGSSSISGDNAGQIAPLVDAIASVHARGAEVVLVSSGAIATGMPFLRLDDRPADLATQQAAAAVGQSVLIFRYQESLDRYGIVAGQVLLTAGDLAAPDHRENAQRAMERLLGLRLLPIVNENDTVATHEIRFGDNDRLAALVARLVDADLLLLLSDVDALYTRPPEEPGARRIEHVGFGDELDGVEIGSTGTGVGTGGAVTKVAAARLAAEAGTGVLLTSTAQVHSALAGEHVGTWFAPRG.

Lys18 serves as a coordination point for ATP. Ser54, Asp141, and Asn153 together coordinate substrate. 173 to 174 contacts ATP; sequence SD.

This sequence belongs to the glutamate 5-kinase family.

It localises to the cytoplasm. It catalyses the reaction L-glutamate + ATP = L-glutamyl 5-phosphate + ADP. It functions in the pathway amino-acid biosynthesis; L-proline biosynthesis; L-glutamate 5-semialdehyde from L-glutamate: step 1/2. Functionally, catalyzes the transfer of a phosphate group to glutamate to form L-glutamate 5-phosphate. This Clavibacter michiganensis subsp. michiganensis (strain NCPPB 382) protein is Glutamate 5-kinase.